Here is a 215-residue protein sequence, read N- to C-terminus: Glycerol-3-phosphate acyltransferase (215 aa).

A run of 5 helical transmembrane segments spans residues 14-34, 63-83, 92-112, 128-148, and 154-174; these read SSSA…AVVV, TAAA…LWLA, WGAY…PLFL, MAIE…VAVF, and LAAL…SGAA.

It belongs to the PlsY family. In terms of assembly, probably interacts with PlsX.

The protein localises to the cell inner membrane. It catalyses the reaction an acyl phosphate + sn-glycerol 3-phosphate = a 1-acyl-sn-glycero-3-phosphate + phosphate. Its pathway is lipid metabolism; phospholipid metabolism. Catalyzes the transfer of an acyl group from acyl-phosphate (acyl-PO(4)) to glycerol-3-phosphate (G3P) to form lysophosphatidic acid (LPA). This enzyme utilizes acyl-phosphate as fatty acyl donor, but not acyl-CoA or acyl-ACP. This Bordetella bronchiseptica (strain ATCC BAA-588 / NCTC 13252 / RB50) (Alcaligenes bronchisepticus) protein is Glycerol-3-phosphate acyltransferase.